The chain runs to 414 residues: MFLTLDDFELEGKTVALRVDINSPIDVNTGDILDDTRIKACSDTIKSLSEKGAKVVILAHQSRPGKKDFTTLEAHAKKLSEVLNMEVTHVDGLICASAREAILAMDNGEIILLENVRLLAEEVLSDWKSWEEITPEKQAKTVMIKKLHPFFDYFVNDAFAAAHRAQPSLVGFSYYVPMLCGRVMEKELFTLTKVLKNPERPCVFALGGAKADDSIEVLKNVLEKQTADQVLTSGVVANIFLVAKGYKIGPNENVIADMGYTNQIEIAKELISKYGDKIVVPIDAALNVDGERVEKELDLNEEITYPIHDMGEKTMKLYEEILKDAKTVVANGPAGVFENKNFLKGTEELLKSTANSKGFSVIGGGHLSAAAEVVGLAGKMDHISTGGGACIEFLAGKKLPVIEMLSKSYEKHKL.

Substrate is bound by residues 20-22 (DIN), Arg37, 60-63 (HQSR), Arg117, and Arg164. Residues Glu338 and 364 to 367 (GGHL) each bind ATP.

This sequence belongs to the phosphoglycerate kinase family. In terms of assembly, monomer.

The protein resides in the cytoplasm. It carries out the reaction (2R)-3-phosphoglycerate + ATP = (2R)-3-phospho-glyceroyl phosphate + ADP. It participates in carbohydrate degradation; glycolysis; pyruvate from D-glyceraldehyde 3-phosphate: step 2/5. This is Phosphoglycerate kinase from Methanococcus maripaludis (strain DSM 14266 / JCM 13030 / NBRC 101832 / S2 / LL).